The sequence spans 380 residues: Ribosomal RNA large subunit methyltransferase F (380 aa).

Disordered stretches follow at residues 1–54 and 260–279; these read MSHK…PRNA and SQVM…ATDK. Positions 21 to 32 are enriched in low complexity; sequence QRQVVSKSSLQK. The span at 44–53 shows a compositional bias: basic residues; the sequence is QKSKALHPRN. Over residues 260-270 the composition is skewed to low complexity; it reads SQVMSPQVQPS.

It belongs to the methyltransferase superfamily. METTL16/RlmF family.

The protein resides in the cytoplasm. It catalyses the reaction adenosine(1618) in 23S rRNA + S-adenosyl-L-methionine = N(6)-methyladenosine(1618) in 23S rRNA + S-adenosyl-L-homocysteine + H(+). Its function is as follows. Specifically methylates the adenine in position 1618 of 23S rRNA. The chain is Ribosomal RNA large subunit methyltransferase F from Shewanella pealeana (strain ATCC 700345 / ANG-SQ1).